A 745-amino-acid chain; its full sequence is Probable GMP synthase [glutamine-hydrolyzing] (745 aa).

Positions 1-37 are disordered; sequence MKRSSSMLDINEDSQHSTNKAPPPKKAPEDRFDSANM. The Glutamine amidotransferase type-1 domain occupies 60 to 252; sequence RIAILDFGAQ…LFKVVGCCGN (193 aa). The active-site For GATase activity is C138. Residues H226 and E228 contribute to the active site. Residues 253–461 form the GMPS ATP-PPase domain; it reads FTIQNREQSC…LGLPESIVQR (209 aa). An ATP-binding site is contributed by 280-286; sequence SGGVDSA. Substrate contacts are provided by R363, D563, Q662, K737, and E743.

In terms of assembly, homodimer.

It catalyses the reaction XMP + L-glutamine + ATP + H2O = GMP + L-glutamate + AMP + diphosphate + 2 H(+). Its pathway is purine metabolism; GMP biosynthesis; GMP from XMP (L-Gln route): step 1/1. The protein is Probable GMP synthase [glutamine-hydrolyzing] (gmps-1) of Caenorhabditis elegans.